A 209-amino-acid polypeptide reads, in one-letter code: Large ribosomal subunit protein bL25 (209 aa).

Residues 190-209 (LKSEEAASEGAAEEEAKDGE) are disordered. Residues 200-209 (AAEEEAKDGE) show a composition bias toward acidic residues.

This sequence belongs to the bacterial ribosomal protein bL25 family. CTC subfamily. In terms of assembly, part of the 50S ribosomal subunit; part of the 5S rRNA/L5/L18/L25 subcomplex. Contacts the 5S rRNA. Binds to the 5S rRNA independently of L5 and L18.

This is one of the proteins that binds to the 5S RNA in the ribosome where it forms part of the central protuberance. The sequence is that of Large ribosomal subunit protein bL25 from Brucella anthropi (strain ATCC 49188 / DSM 6882 / CCUG 24695 / JCM 21032 / LMG 3331 / NBRC 15819 / NCTC 12168 / Alc 37) (Ochrobactrum anthropi).